A 351-amino-acid polypeptide reads, in one-letter code: MGNEKARVGIIGASGYGGIQLVRLLLEHPQVELTYLAGHSSAGKPYSDLYPHLTHRVNLTIEPIDLEAIASRCDAVFLGLPNGLACDMAPALLAKGCKVLDLSADYRFRNLNTYTEWYKKDRQDQATNNQAVYGLPELYRDAIRDAQLIGCPGCYPTASLLALSPLLKQGFIVPETAIIDAKSGTSGGGREAKVNMLLAEAEGSLGAYGVAKHRHTPEIEQIASDLAGTELRVQFTPHLIPMVRGILATVYATLRDPGLVRDDLITIYSAFYRASPFVKILPHGVYPQTKWAWGTNLCYIGIEVDPRTGRVIVLSAIDNLVKGQAGQAVQCLNLMMGWEESLGLPQLAFYP.

Residue Cys154 is part of the active site.

This sequence belongs to the NAGSA dehydrogenase family. Type 1 subfamily.

It localises to the cytoplasm. The enzyme catalyses N-acetyl-L-glutamate 5-semialdehyde + phosphate + NADP(+) = N-acetyl-L-glutamyl 5-phosphate + NADPH + H(+). Its pathway is amino-acid biosynthesis; L-arginine biosynthesis; N(2)-acetyl-L-ornithine from L-glutamate: step 3/4. Catalyzes the NADPH-dependent reduction of N-acetyl-5-glutamyl phosphate to yield N-acetyl-L-glutamate 5-semialdehyde. The chain is N-acetyl-gamma-glutamyl-phosphate reductase from Synechocystis sp. (strain ATCC 27184 / PCC 6803 / Kazusa).